Consider the following 37-residue polypeptide: Myo-inositol-binding protein (37 aa).

This sequence belongs to the bacterial solute-binding protein 2 family.

The protein resides in the periplasm. In Pseudomonas sp, this protein is Myo-inositol-binding protein.